The following is a 622-amino-acid chain: 4-hydroxyphenylalkanoate adenylyltransferase (622 aa).

Belongs to the ATP-dependent AMP-binding enzyme family.

The catalysed reaction is 17-(4-hydroxyphenyl)heptadecanoate + holo-[(phenol)carboxyphthiodiolenone synthase] + ATP = 17-(4-hydroxyphenyl)heptadecanoyl-[(phenol)carboxyphthiodiolenone synthase] + AMP + diphosphate. It carries out the reaction 19-(4-hydroxyphenyl)nonadecanoate + holo-[(phenol)carboxyphthiodiolenone synthase] + ATP = 19-(4-hydroxyphenyl)nonadecanoyl-[(phenol)carboxyphthiodiolenone synthase] + AMP + diphosphate. It participates in lipid metabolism; fatty acid biosynthesis. Catalyzes the activation of long-chain fatty acids as acyl-adenylates (acyl-AMP), which are then transferred to the multifunctional polyketide synthase PpsA for further chain extension. Involved in the biosynthesis of phenolphthiocerol, which is an important intermediate in the biosynthesis of phenolic glycolipid (PGL), also called mycosid B. This Mycobacterium marinum (strain ATCC BAA-535 / M) protein is 4-hydroxyphenylalkanoate adenylyltransferase (fadD29).